The following is a 97-amino-acid chain: Large ribosomal subunit protein bL31B (97 aa).

This sequence belongs to the bacterial ribosomal protein bL31 family. Type B subfamily. Part of the 50S ribosomal subunit.

This Mycolicibacterium paratuberculosis (strain ATCC BAA-968 / K-10) (Mycobacterium paratuberculosis) protein is Large ribosomal subunit protein bL31B (rpmE2).